We begin with the raw amino-acid sequence, 1955 residues long: Rootletin (1955 aa).

Coiled coils occupy residues 29–58, 162–223, 284–1303, 1368–1579, and 1607–1863; these read EENRRNRQVIQDINDQLQRFRQRANAESIE, EENL…QQHT, LMRK…AVES, VGVT…EELR, and RRWE…RTKG. Disordered stretches follow at residues 321–341, 391–451, 504–551, 907–935, and 961–998; these read VTENYMKSEEKANERQRDLKR, LTTK…KKLD, LKER…RSLK, EKLNEQNDGDRAEWSNERNRLESSKNEAV, and RDLEDSHEKSRDLDDKLRKMELTDEEKEEDRKKEQKTL. Basic and acidic residues-rich tracts occupy residues 326–341 and 396–451; these read MKSEEKANERQRDLKR and GEID…KKLD. Basic and acidic residues-rich tracts occupy residues 907 to 931, 961 to 982, and 989 to 998; these read EKLNEQNDGDRAEWSNERNRLESSK, RDLEDSHEKSRDLDDKLRKMEL, and EDRKKEQKTL.

It belongs to the rootletin family. In terms of tissue distribution, expressed in head ciliated neurons.

It localises to the cytoplasm. The protein localises to the cytoskeleton. The protein resides in the cilium basal body. It is found in the cilium axoneme. Functionally, major structural component of the ciliary rootlet, a cytoskeletal-like structure in ciliated cells which originates from the basal body at the proximal end of a cilium and extends proximally toward the cell nucleus. Required for cilia integrity and function in sensory neurons. Maintains cilia integrity, partly by modulating the assembly and transport of intraflagellar proteins along the ciliary axoneme. Required for normal mating behavior and normal responses to environmental and chemical stimuli. This chain is Rootletin, found in Caenorhabditis elegans.